We begin with the raw amino-acid sequence, 382 residues long: Cholinephosphotransferase 1 (382 aa).

The Cytoplasmic segment spans residues 1 to 51 (MPQCECPEPLSAVQLKRLEEHKYSAAGRSLFEPPCQIYWNWLVQQIPTWVA). A helical transmembrane segment spans residues 52-72 (PNTLTTIGLVINVITTVILVY). Asn53 contacts CDP-choline. The Lumenal portion of the chain corresponds to 73–82 (YSPTATEEVP). The helical transmembrane segment at 83–107 (GWAFFLSALGLFIYQSLDAIDGKQA) threads the bilayer. Residues Asp100 and Asp103 each contribute to the Mg(2+) site. Arg108 is a binding site for CDP-choline. Residues 108–114 (RRTNSSS) lie on the Cytoplasmic side of the membrane. Residues 115–139 (ALGELFDHGCDAVSTVFVAVGTCIC) form a helical membrane-spanning segment. Asp121 serves as a coordination point for Mg(2+). His122 functions as the Proton acceptor in the catalytic mechanism. A Mg(2+)-binding site is contributed by Asp125. At 140 to 149 (CGIGAYPNWM) the chain is on the lumenal side. Residues 150-168 (FFCGFVGMFMFFCAHWQTY) traverse the membrane as a helical segment. Residues 169-179 (VSGTLRFGLVD) lie on the Cytoplasmic side of the membrane. The chain crosses the membrane as a helical span at residues 180 to 196 (VTEVQIAIIIMYLLTAF). The Lumenal segment spans residues 197 to 211 (TGVSFWEMRVPVLGV). The helical transmembrane segment at 212 to 237 (NLQTFPILGIIGGFLYSTYNYFFVIM) threads the bilayer. At 238 to 254 (NGGVGKNGSTVADTSVL) the chain is on the cytoplasmic side. The chain crosses the membrane as a helical span at residues 255–270 (TPGLHIGLILTLAFII). Residues 271–282 (FKKSSSHLFEHH) lie on the Lumenal side of the membrane. Residues 283–305 (PCLYVLTFGMVIAKISNKLVVAH) traverse the membrane as a helical segment. Topologically, residues 306–318 (MTKSELHLQDTAF) are cytoplasmic. The chain crosses the membrane as a helical span at residues 319–328 (IGPGLLFLNQ). The Lumenal segment spans residues 329-335 (YFNSYID). The helical transmembrane segment at 336–365 (EHIVLWIAMVLSLVDLVRYCTAVCLQIASH) threads the bilayer. The Cytoplasmic segment spans residues 366-382 (LRIRVFSISPQGHAHKD).

The protein belongs to the CDP-alcohol phosphatidyltransferase class-I family. It depends on Mg(2+) as a cofactor. The cofactor is Mn(2+).

It localises to the golgi apparatus membrane. The catalysed reaction is CDP-choline + a 1,2-diacyl-sn-glycerol = a 1,2-diacyl-sn-glycero-3-phosphocholine + CMP + H(+). It carries out the reaction 1-octadecanoyl-2-(5Z,8Z,11Z,14Z-eicosatetraenoyl)-sn-glycerol + CDP-choline = 1-octadecanoyl-2-(5Z,8Z,11Z,14Z-eicosatetraenoyl)-sn-glycero-3-phosphocholine + CMP + H(+). The enzyme catalyses 1-hexadecanoyl-2-(9Z-octadecenoyl)-sn-glycerol + CDP-choline = 1-hexadecanoyl-2-(9Z-octadecenoyl)-sn-glycero-3-phosphocholine + CMP + H(+). It catalyses the reaction 1-hexadecanoyl-2-(4Z,7Z,10Z,13Z,16Z,19Z-docosahexaenoyl)-sn-glycerol + CDP-choline = 1-hexadecanoyl-2-(4Z,7Z,10Z,13Z,16Z,19Z-docosahexaenoyl)-sn-glycero-3-phosphocholine + CMP + H(+). The catalysed reaction is 1,2-dioctanoyl-sn-glycerol + CDP-choline = 1,2-dioctanoyl-sn-glycero-3-phosphocholine + CMP + H(+). It functions in the pathway phospholipid metabolism; phosphatidylcholine biosynthesis; phosphatidylcholine from phosphocholine: step 2/2. Its function is as follows. Catalyzes the final step of de novo phosphatidylcholine (PC) synthesis, i.e. the transfer of choline phosphate from CDP-choline to the free hydroxyl of a diacylglycerol (DAG), producing a PC. It thereby plays a central role in the formation and maintenance of vesicular membranes. The polypeptide is Cholinephosphotransferase 1 (chpt1) (Danio rerio (Zebrafish)).